Here is a 345-residue protein sequence, read N- to C-terminus: uncharacterized protein (345 aa).

A run of 8 helical transmembrane segments spans residues 9–31 (VVAF…AAFV), 84–103 (TLVA…TYLL), 116–138 (YFSL…ILYT), 148–170 (VPMQ…SGIF), 182–204 (VVFV…TIHA), 269–286 (WFFW…GVLG), 291–308 (ISHY…IAGY), and 313–335 (HGLT…VFFI).

It localises to the cell membrane. This is an uncharacterized protein from Treponema pallidum (strain Nichols).